A 513-amino-acid polypeptide reads, in one-letter code: Na(+)/H(+) antiporter NhaB (513 aa).

The next 11 helical transmembrane spans lie at leucine 23 to alanine 43, isoleucine 52 to isoleucine 72, leucine 97 to phenylalanine 117, phenylalanine 144 to isoleucine 164, leucine 202 to proline 222, phenylalanine 238 to leucine 258, alanine 303 to isoleucine 323, threonine 348 to isoleucine 368, leucine 391 to isoleucine 411, alanine 447 to isoleucine 467, and valine 475 to phenylalanine 495.

It belongs to the NhaB Na(+)/H(+) (TC 2.A.34) antiporter family.

Its subcellular location is the cell inner membrane. It carries out the reaction 2 Na(+)(in) + 3 H(+)(out) = 2 Na(+)(out) + 3 H(+)(in). Functionally, na(+)/H(+) antiporter that extrudes sodium in exchange for external protons. This chain is Na(+)/H(+) antiporter NhaB, found in Escherichia coli (strain SMS-3-5 / SECEC).